The chain runs to 64 residues: Large ribosomal subunit protein uL29 (64 aa).

The protein belongs to the universal ribosomal protein uL29 family.

This chain is Large ribosomal subunit protein uL29, found in Psychrobacter sp. (strain PRwf-1).